The primary structure comprises 291 residues: Pyridoxal 5'-phosphate synthase subunit PdxS (291 aa).

Residue Asp23 coordinates D-ribose 5-phosphate. Lys80 serves as the catalytic Schiff-base intermediate with D-ribose 5-phosphate. Position 152 (Gly152) interacts with D-ribose 5-phosphate. A D-glyceraldehyde 3-phosphate-binding site is contributed by Arg164. D-ribose 5-phosphate is bound by residues Gly213 and 234 to 235 (GS).

This sequence belongs to the PdxS/SNZ family. In the presence of PdxT, forms a dodecamer of heterodimers.

It carries out the reaction aldehydo-D-ribose 5-phosphate + D-glyceraldehyde 3-phosphate + L-glutamine = pyridoxal 5'-phosphate + L-glutamate + phosphate + 3 H2O + H(+). The protein operates within cofactor biosynthesis; pyridoxal 5'-phosphate biosynthesis. Catalyzes the formation of pyridoxal 5'-phosphate from ribose 5-phosphate (RBP), glyceraldehyde 3-phosphate (G3P) and ammonia. The ammonia is provided by the PdxT subunit. Can also use ribulose 5-phosphate and dihydroxyacetone phosphate as substrates, resulting from enzyme-catalyzed isomerization of RBP and G3P, respectively. This chain is Pyridoxal 5'-phosphate synthase subunit PdxS, found in Bifidobacterium longum (strain DJO10A).